Consider the following 74-residue polypeptide: MKPEIHPKYTKVTVNCANCGTSFETRSTRNNIKVDICSSCHPFYTGKQVLVDTAGRVERFKKRFAKAAPKAAAN.

Belongs to the bacterial ribosomal protein bL31 family. Type A subfamily. In terms of assembly, part of the 50S ribosomal subunit.

Functionally, binds the 23S rRNA. The sequence is that of Large ribosomal subunit protein bL31 from Chlorobaculum parvum (strain DSM 263 / NCIMB 8327) (Chlorobium vibrioforme subsp. thiosulfatophilum).